Consider the following 271-residue polypeptide: Glutamate racemase (271 aa).

Substrate contacts are provided by residues 10–11 and 42–43; these read DS and YG. C73 functions as the Proton donor/acceptor in the catalytic mechanism. 74–75 provides a ligand contact to substrate; the sequence is NT. The Proton donor/acceptor role is filled by C183. Position 184 to 185 (184 to 185) interacts with substrate; that stretch reads TH.

The protein belongs to the aspartate/glutamate racemases family.

The enzyme catalyses L-glutamate = D-glutamate. Its pathway is cell wall biogenesis; peptidoglycan biosynthesis. Functionally, provides the (R)-glutamate required for cell wall biosynthesis. The polypeptide is Glutamate racemase (Lactococcus lactis subsp. cremoris (strain MG1363)).